A 364-amino-acid polypeptide reads, in one-letter code: MYIKYLKLINFRNYKELDIEFDKNINIFVGDNAQGKTNILESMYYCSIGKSPRTSKDKELINWDNKESYIKVHILKKLFNKKIEIKIFKEGKKGININSIKVSKLSELMGVLNVVMFSPEDLKIIKESPVYRRKFLDIELCKFSKKYYYGLVQYNKVLTARNIILKKWNKGNYIDILQVYDKQLAKYGEVIIKLRNNYLKKLSEKGKVIHSDITSGIENIEFKYMTCLTNFDNIEDDLFKILEFNRKKDIYKGITLYGPHRDDFIVNINGVNVRNFGSQGQQRTSILTMKFASLEIIKEIIGEYPVLLLDDVLSELDKNRQKYILSSIKDIQTFITCTGIDDIKKSIIDEAQLFIVKKGKVSRI.

Gly30 to Thr37 is an ATP binding site.

This sequence belongs to the RecF family.

It localises to the cytoplasm. The RecF protein is involved in DNA metabolism; it is required for DNA replication and normal SOS inducibility. RecF binds preferentially to single-stranded, linear DNA. It also seems to bind ATP. The chain is DNA replication and repair protein RecF from Clostridium kluyveri (strain ATCC 8527 / DSM 555 / NBRC 12016 / NCIMB 10680 / K1).